The primary structure comprises 238 residues: Succinate dehydrogenase assembly factor 2, mitochondrial (238 aa).

A disordered region spans residues glycine 47–serine 82. Over residues lysine 68–threonine 80 the composition is skewed to basic and acidic residues.

The protein belongs to the SDHAF2 family. Interacts with the flavoprotein subunit within the SDH catalytic dimer.

It is found in the mitochondrion matrix. Its function is as follows. Plays an essential role in the assembly of succinate dehydrogenase (SDH), an enzyme complex (also referred to as respiratory complex II) that is a component of both the tricarboxylic acid (TCA) cycle and the mitochondrial electron transport chain, and which couples the oxidation of succinate to fumarate with the reduction of ubiquinone (coenzyme Q) to ubiquinol. Required for flavinylation (covalent attachment of FAD) of the flavoprotein subunit of the SDH catalytic dimer. This is Succinate dehydrogenase assembly factor 2, mitochondrial from Mycosarcoma maydis (Corn smut fungus).